The primary structure comprises 410 residues: LL-diaminopimelate aminotransferase (410 aa).

The substrate site is built by tyrosine 15 and glycine 42. Residues tyrosine 72, 108-109 (AK), tyrosine 132, asparagine 188, tyrosine 219, and 247-249 (SFS) each bind pyridoxal 5'-phosphate. Residues lysine 109, tyrosine 132, and asparagine 188 each coordinate substrate. Residue lysine 250 is modified to N6-(pyridoxal phosphate)lysine. 2 residues coordinate pyridoxal 5'-phosphate: arginine 258 and asparagine 293. Substrate contacts are provided by asparagine 293 and arginine 389.

The protein belongs to the class-I pyridoxal-phosphate-dependent aminotransferase family. LL-diaminopimelate aminotransferase subfamily. Homodimer. Pyridoxal 5'-phosphate is required as a cofactor.

The enzyme catalyses (2S,6S)-2,6-diaminopimelate + 2-oxoglutarate = (S)-2,3,4,5-tetrahydrodipicolinate + L-glutamate + H2O + H(+). It participates in amino-acid biosynthesis; L-lysine biosynthesis via DAP pathway; LL-2,6-diaminopimelate from (S)-tetrahydrodipicolinate (aminotransferase route): step 1/1. Its function is as follows. Involved in the synthesis of meso-diaminopimelate (m-DAP or DL-DAP), required for both lysine and peptidoglycan biosynthesis. Catalyzes the direct conversion of tetrahydrodipicolinate to LL-diaminopimelate. Can also use m-DAP instead of LL-DAP as the amino-group donor. This is LL-diaminopimelate aminotransferase from Bacteroides fragilis (strain ATCC 25285 / DSM 2151 / CCUG 4856 / JCM 11019 / LMG 10263 / NCTC 9343 / Onslow / VPI 2553 / EN-2).